The chain runs to 519 residues: Voltage-gated potassium channel regulatory subunit KCNG4 (519 aa).

Residues 1–25 (MPMPSRDGGLHPRHHHYGSHSPWSQ) form a disordered region. Topologically, residues 1-218 (MPMPSRDGGL…EMVENPQSGL (218 aa)) are cytoplasmic. Residues 219-240 (PGKVFACLSILFVATTAVSLCV) form a helical membrane-spanning segment. Residues 241–261 (STMPDLRAEEDQGECSRKCYY) are Extracellular-facing. The chain crosses the membrane as a helical span at residues 262–283 (IFIVETICVAWFSLEFCLRFVQ). Residues 284 to 294 (AQDKCQFFQGP) lie on the Cytoplasmic side of the membrane. Residues 295 to 314 (LNIIDILAISPYYVSLAVSE) form a helical membrane-spanning segment. At 315–328 (EPPEDGERPSGSSY) the chain is on the extracellular side. A helical; Voltage-sensor transmembrane segment spans residues 329–353 (LEKVGLVLRVLRALRILYVMRLARH). Over 354-368 (SLGLQTLGLTVRRCT) the chain is Cytoplasmic. Residues 369–390 (REFGLLLLFLAVAITLFSPLVY) traverse the membrane as a helical segment. Over 391–405 (VAEKESGRVLEFTSI) the chain is Extracellular. The helical intramembrane region spans 406-417 (PASYWWAIISMT). The Selectivity filter signature appears at 418-423 (TVGYGD). An intramembrane segment occupies 418-425 (TVGYGDMV). The Extracellular segment spans residues 426–432 (PRSVPGQ). A helical transmembrane segment spans residues 433-461 (MVALSSILSGILIMAFPATSIFHTFSHSY). The Cytoplasmic portion of the chain corresponds to 462–519 (LELKKEQEQLQARLRHLQNTGPASECELLDPHVASEHELMNDVNDLILEGPALPIMHM).

The protein belongs to the potassium channel family. G (TC 1.A.1.2) subfamily. Kv6.4/KCNG4 sub-subfamily. As to quaternary structure, heterotetramer with KCNB1. Does not form homomultimer. As to expression, highly expressed in brain, and at lower levels in liver, small intestine and colon.

Its subcellular location is the cell membrane. Functionally, regulatory subunit of the voltage-gated potassium (Kv) channel which, when coassembled with KCNB1, modulates the kinetics parameters of the heterotetrameric channel namely the time course of activation, deactivation and inactivation and on the voltage-dependence of activation. Potassium channel subunit that does not form functional channels by itself. Reduces the deactivation rate. Modulates the threshold for activation by shifting by approximately 20 mV in hyperpolarizing direction. Markedly changes the inactivation by shifting the voltage dependence of inactivation by approximately 40 mV in hyperpolarizing direction. Acceleratee activation and enhances the time course of activation. In Homo sapiens (Human), this protein is Voltage-gated potassium channel regulatory subunit KCNG4.